A 512-amino-acid polypeptide reads, in one-letter code: Lysine--tRNA ligase (512 aa).

The Mg(2+) site is built by Glu408 and Glu415.

It belongs to the class-II aminoacyl-tRNA synthetase family. Homodimer. Requires Mg(2+) as cofactor.

It localises to the cytoplasm. It carries out the reaction tRNA(Lys) + L-lysine + ATP = L-lysyl-tRNA(Lys) + AMP + diphosphate. This Prochlorococcus marinus (strain MIT 9515) protein is Lysine--tRNA ligase.